The sequence spans 304 residues: N-acetyl-D-glucosamine kinase (304 aa).

Residues 4 to 11 and 133 to 140 each bind ATP; these read GFDIGGTK and GFGGGLIF. Residues His-157, Cys-178, Cys-180, and Cys-185 each contribute to the Zn(2+) site.

It belongs to the ROK (NagC/XylR) family. NagK subfamily.

The enzyme catalyses N-acetyl-D-glucosamine + ATP = N-acetyl-D-glucosamine 6-phosphate + ADP + H(+). The protein operates within cell wall biogenesis; peptidoglycan recycling. Catalyzes the phosphorylation of N-acetyl-D-glucosamine (GlcNAc) derived from cell-wall degradation, yielding GlcNAc-6-P. The sequence is that of N-acetyl-D-glucosamine kinase from Mannheimia succiniciproducens (strain KCTC 0769BP / MBEL55E).